The sequence spans 264 residues: MVTLMAIAIAIASGKGGTGKTTISANLAVALAKFGKKVAVLDADIAMANLELIMGLEGKPVTLNDVLAGKADIKDAIYEGPEGVLVIPAGVSLEKFRRAKPEKLEEVLKAIHDLVEILIIDCPAGIGKETLIAISSADGLIVVVNPEISSISDALKIIAITKRLGTDIIGAIVNRVSNESTELGVKAIETILEVPVIGVVPEDPHVRKAAAFGTPLVIMYPDSPAAQAIMEIAAKLIGAKYEAQLKKKKESFISKFIKGLFGRR.

Residue 15–22 (KGGTGKTT) coordinates ATP.

It belongs to the ParA family. MinD subfamily.

This is an uncharacterized protein from Methanocaldococcus jannaschii (strain ATCC 43067 / DSM 2661 / JAL-1 / JCM 10045 / NBRC 100440) (Methanococcus jannaschii).